Consider the following 594-residue polypeptide: Fidgetin-like protein 1 (594 aa).

2 disordered regions span residues 1–79 (MYSP…DDEL) and 239–261 (QSIG…KRCS). Residues 56-73 (PSDSAQQQPPFKSRSQQN) show a composition bias toward polar residues. Residues Ala-319 and 359–364 (GTGKTM) each bind ATP.

The protein belongs to the AAA ATPase family. As to quaternary structure, hexamer. Mg(2+) is required as a cofactor. Expressed in germ cells.

The protein localises to the nucleus. The enzyme catalyses ATP + H2O = ADP + phosphate + H(+). Has a role in spindle assembly which acts in the progression through mitosis during embryogenesis. Required for fertility. The protein is Fidgetin-like protein 1 (figl-1) of Caenorhabditis elegans.